The sequence spans 256 residues: Thiazole synthase (256 aa).

The active-site Schiff-base intermediate with DXP is the lysine 95. 1-deoxy-D-xylulose 5-phosphate is bound by residues glycine 156, 182–183 (AG), and 204–205 (NT).

The protein belongs to the ThiG family. Homotetramer. Forms heterodimers with either ThiH or ThiS.

The protein resides in the cytoplasm. The catalysed reaction is [ThiS sulfur-carrier protein]-C-terminal-Gly-aminoethanethioate + 2-iminoacetate + 1-deoxy-D-xylulose 5-phosphate = [ThiS sulfur-carrier protein]-C-terminal Gly-Gly + 2-[(2R,5Z)-2-carboxy-4-methylthiazol-5(2H)-ylidene]ethyl phosphate + 2 H2O + H(+). Its pathway is cofactor biosynthesis; thiamine diphosphate biosynthesis. Functionally, catalyzes the rearrangement of 1-deoxy-D-xylulose 5-phosphate (DXP) to produce the thiazole phosphate moiety of thiamine. Sulfur is provided by the thiocarboxylate moiety of the carrier protein ThiS. In vitro, sulfur can be provided by H(2)S. The polypeptide is Thiazole synthase (Salmonella paratyphi B (strain ATCC BAA-1250 / SPB7)).